The chain runs to 102 residues: Nuclear protein 2 (102 aa).

Disordered stretches follow at residues 1 to 26 and 46 to 102; these read MDPP…ALPT and PASG…TRLA. A compositionally biased stretch (basic residues) spans 85-102; sequence QRKRRQRQLQPRPRTRLA.

It belongs to the NUPR family.

It is found in the nucleus. Acts as a transcriptional repressor by inhibiting gene expression at the NUPR1 promoter in a p53/TP53-dependent manner in cancer cells. Involved in the G1 cell cycle arrest, and in a decrease in cell viability and cell proliferation of pancreatic cancer cells. Plays a role as a negative regulator of the protumoral factor NUPR1. The polypeptide is Nuclear protein 2 (Mus musculus (Mouse)).